The sequence spans 349 residues: Anthranilate phosphoribosyltransferase (349 aa).

5-phospho-alpha-D-ribose 1-diphosphate contacts are provided by residues G82, 85-86 (GD), 92-95 (NVST), 110-118 (KHGNRAVSG), and S122. Anthranilate is bound at residue G82. S94 serves as a coordination point for Mg(2+). N113 is an anthranilate binding site. Residue R168 coordinates anthranilate. Residues D227 and E228 each coordinate Mg(2+).

Belongs to the anthranilate phosphoribosyltransferase family. As to quaternary structure, homodimer. Mg(2+) is required as a cofactor.

It catalyses the reaction N-(5-phospho-beta-D-ribosyl)anthranilate + diphosphate = 5-phospho-alpha-D-ribose 1-diphosphate + anthranilate. The protein operates within amino-acid biosynthesis; L-tryptophan biosynthesis; L-tryptophan from chorismate: step 2/5. Its function is as follows. Catalyzes the transfer of the phosphoribosyl group of 5-phosphorylribose-1-pyrophosphate (PRPP) to anthranilate to yield N-(5'-phosphoribosyl)-anthranilate (PRA). The chain is Anthranilate phosphoribosyltransferase from Pseudomonas fluorescens (strain SBW25).